A 222-amino-acid chain; its full sequence is Probable elongation factor 1-beta (222 aa).

The interval 90–111 (KPAADDDDDVDLFGSDDEEDEE) is disordered. The segment covering 94-111 (DDDDDVDLFGSDDEEDEE) has biased composition (acidic residues). A Phosphoserine modification is found at Ser-104.

This sequence belongs to the EF-1-beta/EF-1-delta family. EF-1 is composed of 4 subunits: alpha, beta, beta' and gamma. Post-translationally, phosphorylation affects the GDP/GTP exchange rate.

EF-1-beta and EF-1-delta stimulate the exchange of GDP bound to EF-1-alpha to GTP. This chain is Probable elongation factor 1-beta, found in Drosophila melanogaster (Fruit fly).